Reading from the N-terminus, the 211-residue chain is Dof zinc finger protein 5 (211 aa).

Residues 37–101 form a disordered region; it reads FVVAREKVEP…QRRLQDSAEA (65 aa). The segment covering 68-80 has biased composition (basic and acidic residues); that stretch reads IKREAADRDEEQR. Residues 109–163 form a Dof-type zinc finger; it reads LPCPRCRSRDTKFCYFNNYNVNQPRHFCKACHRYWTAGGALRNVPVGAGRRKNRP. Zn(2+)-binding residues include cysteine 111, cysteine 114, cysteine 136, and cysteine 139. The interval 191 to 211 is disordered; that stretch reads SPTSPSPVYTDRWPVTPDRPF.

The protein resides in the nucleus. Its function is as follows. Transcription factor that may transactivate seed storage protein genes in developing seeds. This Oryza sativa subsp. japonica (Rice) protein is Dof zinc finger protein 5.